Here is a 126-residue protein sequence, read N- to C-terminus: Ribulose bisphosphate carboxylase small subunit, chloroplastic 1 (126 aa).

Belongs to the RuBisCO small chain family. In terms of assembly, heterohexadecamer of 8 large and 8 small subunits.

The protein localises to the plastid. It is found in the chloroplast. In terms of biological role, ruBisCO catalyzes two reactions: the carboxylation of D-ribulose 1,5-bisphosphate, the primary event in carbon dioxide fixation, as well as the oxidative fragmentation of the pentose substrate. Both reactions occur simultaneously and in competition at the same active site. Although the small subunit is not catalytic it is essential for maximal activity. This chain is Ribulose bisphosphate carboxylase small subunit, chloroplastic 1, found in Acetabularia peniculus (Green alga).